The primary structure comprises 158 residues: Cyclic pyranopterin monophosphate synthase (158 aa).

Substrate-binding positions include 74-76 (MCH) and 112-113 (ME). Aspartate 127 is an active-site residue.

Belongs to the MoaC family. In terms of assembly, homohexamer; trimer of dimers.

The enzyme catalyses (8S)-3',8-cyclo-7,8-dihydroguanosine 5'-triphosphate = cyclic pyranopterin phosphate + diphosphate. It participates in cofactor biosynthesis; molybdopterin biosynthesis. Catalyzes the conversion of (8S)-3',8-cyclo-7,8-dihydroguanosine 5'-triphosphate to cyclic pyranopterin monophosphate (cPMP). This chain is Cyclic pyranopterin monophosphate synthase, found in Helicobacter pylori (strain G27).